The chain runs to 249 residues: tRNA (guanine-N(1)-)-methyltransferase (249 aa).

Residues G113 and 133-138 (IGDFVL) each bind S-adenosyl-L-methionine.

The protein belongs to the RNA methyltransferase TrmD family. In terms of assembly, homodimer.

The protein resides in the cytoplasm. The enzyme catalyses guanosine(37) in tRNA + S-adenosyl-L-methionine = N(1)-methylguanosine(37) in tRNA + S-adenosyl-L-homocysteine + H(+). Functionally, specifically methylates guanosine-37 in various tRNAs. This Photobacterium profundum (strain SS9) protein is tRNA (guanine-N(1)-)-methyltransferase.